The chain runs to 43 residues: Neurotrophic factor BDNF (43 aa).

The protein belongs to the NGF-beta family.

The protein resides in the secreted. Promotes the survival of neuronal populations that are all located either in the central nervous system or directly connected to it. This chain is Neurotrophic factor BDNF (bdnf), found in Raja clavata (Thornback ray).